Consider the following 269-residue polypeptide: UPF0739 protein C1orf74 (269 aa).

It belongs to the UPF0739 family.

This is UPF0739 protein C1orf74 (C1orf74) from Homo sapiens (Human).